The following is a 174-amino-acid chain: MGKITFYEDRAFQGRSYETTTDCPNLQPYFSRCNSIRVESGCWMLYERPNYQGQQYLLRRGEYPDYQQWMGLSDSIRSCCLIPQTVSHRLRLYEREDHKGLMMELSEDCPSIQDRFHLSEIRSLHVLEGCWVLYELPNYRGRQYLLRPQEYRRCQDWGAMDAKAGSLRRVVDLY.

2 Beta/gamma crystallin 'Greek key' domains span residues 2–40 (GKIT…RVES) and 41–83 (GCWM…CLIP). Cys23 is subject to S-methylcysteine. The segment at 84-87 (QTVS) is connecting peptide. 2 consecutive Beta/gamma crystallin 'Greek key' domains span residues 88-128 (HRLR…HVLE) and 129-171 (GCWV…RRVV).

The protein belongs to the beta/gamma-crystallin family. Monomer.

Crystallins are the dominant structural components of the vertebrate eye lens. The chain is Gamma-crystallin C (CRYGC) from Homo sapiens (Human).